Consider the following 294-residue polypeptide: Release factor glutamine methyltransferase (294 aa).

Residues E148 and N201 each coordinate S-adenosyl-L-methionine. 201–204 is a substrate binding site; that stretch reads NPPY.

The protein belongs to the protein N5-glutamine methyltransferase family. PrmC subfamily.

It carries out the reaction L-glutaminyl-[peptide chain release factor] + S-adenosyl-L-methionine = N(5)-methyl-L-glutaminyl-[peptide chain release factor] + S-adenosyl-L-homocysteine + H(+). Functionally, methylates the class 1 translation termination release factors RF1/PrfA and RF2/PrfB on the glutamine residue of the universally conserved GGQ motif. The chain is Release factor glutamine methyltransferase from Bifidobacterium longum (strain NCC 2705).